The primary structure comprises 694 residues: Glycine--tRNA ligase beta subunit (694 aa).

This sequence belongs to the class-II aminoacyl-tRNA synthetase family. In terms of assembly, tetramer of two alpha and two beta subunits.

It is found in the cytoplasm. The enzyme catalyses tRNA(Gly) + glycine + ATP = glycyl-tRNA(Gly) + AMP + diphosphate. The protein is Glycine--tRNA ligase beta subunit of Moorella thermoacetica (strain ATCC 39073 / JCM 9320).